Consider the following 101-residue polypeptide: Small ribosomal subunit protein uS14 (101 aa).

Belongs to the universal ribosomal protein uS14 family. Part of the 30S ribosomal subunit. Contacts proteins S3 and S10.

Its function is as follows. Binds 16S rRNA, required for the assembly of 30S particles and may also be responsible for determining the conformation of the 16S rRNA at the A site. This chain is Small ribosomal subunit protein uS14, found in Caulobacter vibrioides (strain ATCC 19089 / CIP 103742 / CB 15) (Caulobacter crescentus).